Consider the following 263-residue polypeptide: Small ribosomal subunit protein eS1 (263 aa).

Basic and acidic residues predominate over residues 236–254 (GDGKGGSDEPGARVDRPEG). The segment at 236–263 (GDGKGGSDEPGARVDRPEGYEPPVQETV) is disordered.

This sequence belongs to the eukaryotic ribosomal protein eS1 family. As to quaternary structure, component of the small ribosomal subunit. Mature ribosomes consist of a small (40S) and a large (60S) subunit. The 40S subunit contains about 33 different proteins and 1 molecule of RNA (18S). The 60S subunit contains about 49 different proteins and 3 molecules of RNA (28S, 5.8S and 5S).

It localises to the cytoplasm. This chain is Small ribosomal subunit protein eS1, found in Periplaneta americana (American cockroach).